A 453-amino-acid chain; its full sequence is Exopolyphosphatase PRUNE1 (453 aa).

Met-1 carries the post-translational modification N-acetylmethionine. 4 residues coordinate Mn(2+): Asp-28, Asp-30, Asp-106, and Asp-179. The short motif at 106–108 is the DHH motif element; it reads DHH. The tract at residues 393 to 420 is essential for homodimerization; it reads SLLSGLSQDEEEPPLPPTPMNSLVDECP. Residues 396–419 are disordered; the sequence is SGLSQDEEEPPLPPTPMNSLVDEC. A Phosphoserine modification is found at Ser-399. Thr-410 carries the phosphothreonine modification. Ser-414 carries the post-translational modification Phosphoserine.

It belongs to the PPase class C family. Prune subfamily. In terms of assembly, homooligomer. Able to homodimerize via its C-terminal domain. Interacts with NME1. Interacts with GSK3; at focal adhesion complexes where paxillin and vinculin are colocalized. Requires Mn(2+) as cofactor.

The protein resides in the cytoplasm. The protein localises to the nucleus. It localises to the cell junction. It is found in the focal adhesion. It catalyses the reaction diphosphate + H2O = 2 phosphate + H(+). With respect to regulation, activated by magnesium ions and inhibited by manganese ions. Inhibited by dipyridamole, moderately sensitive to IBMX and inhibited by vinpocetine. Phosphodiesterase (PDE) that has higher activity toward cAMP than cGMP, as substrate. Plays a role in cell proliferation, is able to induce cell motility and acts as a negative regulator of NME1. The polypeptide is Exopolyphosphatase PRUNE1 (PRUNE1) (Bos taurus (Bovine)).